The following is a 523-amino-acid chain: Calcium uptake protein 3, mitochondrial (523 aa).

The N-terminal 6 residues, 1 to 6, are a transit peptide targeting the mitochondrion; that stretch reads MAALRR. Residues 226–261 form the EF-hand 1 domain; sequence PHAGFRIAFNMFDTDGNEMVDKKEFLVLQEIFRKKN. Asp-238, Asp-240, Asn-242, Met-244, Asp-246, and Glu-249 together coordinate Ca(2+). The EF-hand 2; degenerate domain occupies 395–430; that stretch reads ENTSVFLENVRYSISEEKGITFDEFRSFFQFLNNLE. The EF-hand 3 domain maps to 464-499; the sequence is SPHLVNTVFKIFDVDKDDQLSYKEFIGIMKDRLHRG. Residues Asp-476, Asp-478, Asp-480, Gln-482, and Glu-487 each contribute to the Ca(2+) site.

Belongs to the MICU1 family. MICU3 subfamily. In terms of assembly, heterodimer; disulfide-linked; heterodimerizes with MICU1. Heterodimerizes with isoform 3 of MICU1 (MICU1.1) in skeletal muscle. Component of the uniplex complex, composed of MCU, EMRE/SMDT1, MICU1 and MICU3 in a 4:4:1:1 stoichiometry. In terms of tissue distribution, predominantly expressed in skeletal muscle and central nervous system.

Its subcellular location is the mitochondrion intermembrane space. The protein resides in the mitochondrion inner membrane. In terms of biological role, tissue-specific calcium sensor of the mitochondrial calcium uniporter (MCU) channel, which specifically regulates MCU channel activity in the central nervous system and skeletal muscle. Senses calcium level via its EF-hand domains: compared to MICU1 and MICU2, MICU3 has a higher affinity for calcium. MICU1 and MICU3 form a disulfide-linked heterodimer that stimulates and inhibits MCU activity, depending on the concentration of calcium. At low calcium levels, MICU1 occludes the pore of the MCU channel, preventing mitochondrial calcium uptake. At higher calcium levels, calcium-binding to MICU1 and MICU3 induces a conformational change that weakens MCU-MICU1 interactions and moves the MICU1-MICU3 heterodimer away from the pore, allowing calcium permeation through the MCU channel. The high calcium affinity of MICU3 lowers the calcium threshold necessary for calcium permeation through the MCU channel. The MICU1-MICU3 heterodimer promotes flexibility of neurotransmission in neuronal cells by enhancing mitochondrial calcium uptake in presynapses. It is also required to increase mitochondrial calcium uptake in skeletal muscle cells, thereby increasing ATP production. This Mus musculus (Mouse) protein is Calcium uptake protein 3, mitochondrial.